The primary structure comprises 226 residues: Ribosome maturation factor RimM (226 aa).

The 82-residue stretch at 144 to 225 folds into the PRC barrel domain; that stretch reads ADEFYWVDLI…RIVVDWEADY (82 aa).

Belongs to the RimM family. In terms of assembly, binds ribosomal protein uS19.

Its subcellular location is the cytoplasm. Functionally, an accessory protein needed during the final step in the assembly of 30S ribosomal subunit, possibly for assembly of the head region. Essential for efficient processing of 16S rRNA. May be needed both before and after RbfA during the maturation of 16S rRNA. It has affinity for free ribosomal 30S subunits but not for 70S ribosomes. This is Ribosome maturation factor RimM from Burkholderia ambifaria (strain ATCC BAA-244 / DSM 16087 / CCUG 44356 / LMG 19182 / AMMD) (Burkholderia cepacia (strain AMMD)).